Reading from the N-terminus, the 414-residue chain is Putative competence-damage inducible protein (414 aa).

Belongs to the CinA family.

This chain is Putative competence-damage inducible protein, found in Listeria monocytogenes serotype 4b (strain CLIP80459).